Reading from the N-terminus, the 364-residue chain is MTHQFPSLSPEQKKELSDIAQRIVAPGKGILAADESTGTMGKRFQNINVENIEENRRCFRDILFSTDASIANCVGGIIFFHETLYQKSSNGKLFPQVVKEKGIVVGIKVDKGTAPLMGTDKETTTQGLDGLSERCAQYKKDGCDFAKWRCVLKISDGCPFALAIAENANVLARYASICQMNGLVPIVEPEILPDGDHDLQRCQYATEKVLAAVYKALSDHHVYLEGTLLKPNMVTPGHSCPKKFTPQEVAMATVTALRRTVPASVPGICFLSGGQSEEEASIHLNAINQVPLHRPWKLTFSYGRALQASALAAWQGKDANKAATQQVFVTRAKINGLASKGEYKPSGSADQASQQSLYTASYVY.

The substrate site is built by Arg56 and Lys147. The active-site Proton acceptor is the Glu188. Lys230 functions as the Schiff-base intermediate with dihydroxyacetone-P in the catalytic mechanism.

It belongs to the class I fructose-bisphosphate aldolase family. Homotetramer.

The protein resides in the cytoplasm. It is found in the cytoskeleton. The protein localises to the microtubule organizing center. Its subcellular location is the centrosome. It localises to the centriolar satellite. It carries out the reaction beta-D-fructose 1,6-bisphosphate = D-glyceraldehyde 3-phosphate + dihydroxyacetone phosphate. It functions in the pathway carbohydrate degradation; glycolysis; D-glyceraldehyde 3-phosphate and glycerone phosphate from D-glucose: step 4/4. In Sparus aurata (Gilthead sea bream), this protein is Fructose-bisphosphate aldolase B (aldob).